The primary structure comprises 311 residues: Cbb3-type cytochrome c oxidase subunit CcoP1 (311 aa).

The next 2 membrane-spanning stretches (helical) occupy residues 4 to 24 and 56 to 76; these read FWSG…FWLI and RWWF…LVLY. Cytochrome c domains lie at 130–209 and 220–302; these read QAVK…RKDL and ADLS…YSLS. Positions 143, 146, 147, 186, 233, 236, 237, and 279 each coordinate heme c.

The protein belongs to the CcoP / FixP family. Component of the cbb3-type cytochrome c oxidase at least composed of CcoN, CcoO, CcoQ and CcoP. Requires heme c as cofactor.

Its subcellular location is the cell inner membrane. It functions in the pathway energy metabolism; oxidative phosphorylation. Its function is as follows. C-type cytochrome. Part of the cbb3-type cytochrome c oxidase complex. CcoP subunit is required for transferring electrons from donor cytochrome c via its heme groups to CcoO subunit. From there, electrons are shuttled to the catalytic binuclear center of CcoN subunit where oxygen reduction takes place. The complex also functions as a proton pump. The chain is Cbb3-type cytochrome c oxidase subunit CcoP1 from Stutzerimonas stutzeri (Pseudomonas stutzeri).